The following is a 413-amino-acid chain: MRSEITRETKLLFDLPQDVIEEIFSKVPVTCLRRIRSTCKRLYALLKDRGFIRKHFAKSARQYHALMLKNFRFYSVSFNPNGTEMDVASLFNGERSLIDPYSSSEAIISQAFHCDGLLLCTTKENRLVVLNPFSGQTKWLQPQNRCKIDEAYVLGYDNSDLCHSYKILSFPDLYEQELETIKNAGRDLDVTPEGDLELKTDDFSSNSWRRNLGVTPHGGLGLKIYDFSSNSWKKLDVITPEGCLKSYGVSLKGNAYWVYMSKRRGVNDYSLLSFDFSTESFQHLCVPFHQEADCFGTMALSVVREEHLSLLYQSCETLKVEIWMTKEIDTTFVSWKKFLTVDLEPHLPHLLMFSCRMSFFIDEEKKVAVCCDRDNKVHVVGEDEYRVSSGFYFLDFEGITCCLTVFGYVPRLV.

The region spanning 9 to 55 (TKLLFDLPQDVIEEIFSKVPVTCLRRIRSTCKRLYALLKDRGFIRKH) is the F-box domain.

This is Putative F-box protein At3g17560 from Arabidopsis thaliana (Mouse-ear cress).